The chain runs to 181 residues: Isopentenyl-diphosphate Delta-isomerase (181 aa).

Positions 25 and 32 each coordinate Mn(2+). Positions 30-164 (PLHLAFSCWL…PWAFSPWMVM (135 aa)) constitute a Nudix hydrolase domain. Residue C67 is part of the active site. Position 69 (H69) interacts with Mn(2+). E87 is a binding site for Mg(2+). Mn(2+) is bound by residues E114 and E116. Residue E116 is part of the active site.

Belongs to the IPP isomerase type 1 family. As to quaternary structure, homodimer. Mg(2+) is required as a cofactor. The cofactor is Mn(2+).

Its subcellular location is the cytoplasm. The enzyme catalyses isopentenyl diphosphate = dimethylallyl diphosphate. Its pathway is isoprenoid biosynthesis; dimethylallyl diphosphate biosynthesis; dimethylallyl diphosphate from isopentenyl diphosphate: step 1/1. Its function is as follows. Catalyzes the 1,3-allylic rearrangement of the homoallylic substrate isopentenyl (IPP) to its highly electrophilic allylic isomer, dimethylallyl diphosphate (DMAPP). The chain is Isopentenyl-diphosphate Delta-isomerase from Salmonella agona (strain SL483).